The primary structure comprises 605 residues: Putative glutaminase 2 (605 aa).

Positions 213, 262, 308, 315, 342, 394, and 412 each coordinate substrate. ANK repeat units lie at residues 480-509 and 513-543; these read DRLI…DLNT and DDRT…DVDK. Residues 569-581 are compositionally biased toward basic and acidic residues; it reads KAMKRPEQHRKDS. A disordered region spans residues 569 to 605; that stretch reads KAMKRPEQHRKDSVSSLDTDDEIDDDGFPEKPSFTID. The segment covering 586-595 has biased composition (acidic residues); that stretch reads DTDDEIDDDG.

The protein belongs to the glutaminase family.

The enzyme catalyses L-glutamine + H2O = L-glutamate + NH4(+). The protein is Putative glutaminase 2 (glna-2) of Caenorhabditis elegans.